We begin with the raw amino-acid sequence, 397 residues long: Elongation factor Tu (397 aa).

Positions 10-207 constitute a tr-type G domain; that stretch reads KPHVNVGTIG…ACDSYIPDPQ (198 aa). Positions 19 to 26 are G1; that stretch reads GHIDHGKT. 19–26 serves as a coordination point for GTP; that stretch reads GHIDHGKT. T26 contributes to the Mg(2+) binding site. Residues 60–64 are G2; the sequence is GITIA. A G3 region spans residues 81-84; it reads DCPG. GTP contacts are provided by residues 81-85 and 136-139; these read DCPGH and NKCD. The G4 stretch occupies residues 136–139; it reads NKCD. The interval 174–176 is G5; sequence SAL.

The protein belongs to the TRAFAC class translation factor GTPase superfamily. Classic translation factor GTPase family. EF-Tu/EF-1A subfamily. Monomer.

The protein resides in the cytoplasm. It catalyses the reaction GTP + H2O = GDP + phosphate + H(+). Functionally, GTP hydrolase that promotes the GTP-dependent binding of aminoacyl-tRNA to the A-site of ribosomes during protein biosynthesis. This is Elongation factor Tu from Lawsonia intracellularis (strain PHE/MN1-00).